A 250-amino-acid polypeptide reads, in one-letter code: Isoprenyl transferase (250 aa).

Residue Asp-26 is part of the active site. Asp-26 is a Mg(2+) binding site. Substrate-binding positions include 27–30 (GNGR), Trp-31, Arg-39, His-43, and 71–73 (STE). The Proton acceptor role is filled by Asn-74. Substrate is bound by residues Trp-75, Arg-77, Arg-198, and 204–206 (RLS). Position 217 (Glu-217) interacts with Mg(2+).

Belongs to the UPP synthase family. In terms of assembly, homodimer. Mg(2+) serves as cofactor.

Catalyzes the condensation of isopentenyl diphosphate (IPP) with allylic pyrophosphates generating different type of terpenoids. This is Isoprenyl transferase from Streptococcus agalactiae serotype III (strain NEM316).